A 124-amino-acid polypeptide reads, in one-letter code: Glycine cleavage system H protein (124 aa).

One can recognise a Lipoyl-binding domain in the interval 24–106 (TYTMGITDHA…YDDGWLVKFK (83 aa)). N6-lipoyllysine is present on lysine 65.

The protein belongs to the GcvH family. As to quaternary structure, the glycine cleavage system is composed of four proteins: P, T, L and H. Requires (R)-lipoate as cofactor.

Its function is as follows. The glycine cleavage system catalyzes the degradation of glycine. The H protein shuttles the methylamine group of glycine from the P protein to the T protein. The protein is Glycine cleavage system H protein of Ruthia magnifica subsp. Calyptogena magnifica.